A 239-amino-acid chain; its full sequence is ATP-dependent dethiobiotin synthetase BioD (239 aa).

Glu15 to Phe20 contributes to the ATP binding site. Residue Thr19 participates in Mg(2+) binding. Residue Lys40 is part of the active site. ATP-binding positions include Asp57, Glu118–Gly121, and Asn178–His179. 2 residues coordinate Mg(2+): Asp57 and Glu118.

It belongs to the dethiobiotin synthetase family. Homodimer. Requires Mg(2+) as cofactor.

The protein localises to the cytoplasm. The catalysed reaction is (7R,8S)-7,8-diammoniononanoate + CO2 + ATP = (4R,5S)-dethiobiotin + ADP + phosphate + 3 H(+). It functions in the pathway cofactor biosynthesis; biotin biosynthesis; biotin from 7,8-diaminononanoate: step 1/2. Catalyzes a mechanistically unusual reaction, the ATP-dependent insertion of CO2 between the N7 and N8 nitrogen atoms of 7,8-diaminopelargonic acid (DAPA, also called 7,8-diammoniononanoate) to form a ureido ring. The polypeptide is ATP-dependent dethiobiotin synthetase BioD (Burkholderia lata (strain ATCC 17760 / DSM 23089 / LMG 22485 / NCIMB 9086 / R18194 / 383)).